The sequence spans 528 residues: 4-nitrophenol 4-monooxygenase/4-nitrocatechol 2-monooxygenase, oxygenase component (528 aa).

100–104 lines the substrate pocket; that stretch reads RPPAG. FAD contacts are provided by residues 153-155, 159-162, and Thr194; these read PMF and QFDR. Residue 205–206 coordinates substrate; that stretch reads GN. FAD is bound at residue 461–464; sequence TMQR.

This sequence belongs to the FADH(2)-utilizing monooxygenase family. The 4-NP/4-NCA monooxygenase is composed of an oxygenase component NpcA and a reductase component NpcB. Requires FAD as cofactor.

The enzyme catalyses 4-nitrophenol + NADH + O2 + H(+) = 4-nitrocatechol + NAD(+) + H2O. The catalysed reaction is 4-nitrocatechol + NADPH + O2 = 2-hydroxy-1,4-benzoquinone + nitrite + NADP(+) + H2O. It catalyses the reaction 4-nitrocatechol + NADH + O2 = 2-hydroxy-1,4-benzoquinone + nitrite + NAD(+) + H2O. Its pathway is aromatic compound metabolism. It participates in xenobiotic degradation. Inhibited by methimazole. In terms of biological role, involved in the degradation of para-nitrophenol (4-NP). Catalyzes both the initial hydroxylation of 4-NP to produce 4-nitrocatechol (4-NCA) and the subsequent oxidative release of the nitro group from 4-NCA to produce 2-hydroxy-1,4-benzoquinone. It can also use 4-nitroresorcinol as substrate with a rate of nitrite release similar to that observed with the two physiological substrates, 4-PN and 4-NCA. This Rhodococcus opacus (Nocardia opaca) protein is 4-nitrophenol 4-monooxygenase/4-nitrocatechol 2-monooxygenase, oxygenase component (npcA).